The following is a 357-amino-acid chain: RNA 3'-terminal phosphate cyclase (357 aa).

ATP contacts are provided by residues Gln-102 and 293 to 296; that span reads HMGD. Catalysis depends on His-319, which acts as the Tele-AMP-histidine intermediate.

It belongs to the RNA 3'-terminal cyclase family. Type 1 subfamily.

Its subcellular location is the cytoplasm. The catalysed reaction is a 3'-end 3'-phospho-ribonucleotide-RNA + ATP = a 3'-end 2',3'-cyclophospho-ribonucleotide-RNA + AMP + diphosphate. Catalyzes the conversion of 3'-phosphate to a 2',3'-cyclic phosphodiester at the end of RNA. The mechanism of action of the enzyme occurs in 3 steps: (A) adenylation of the enzyme by ATP; (B) transfer of adenylate to an RNA-N3'P to produce RNA-N3'PP5'A; (C) and attack of the adjacent 2'-hydroxyl on the 3'-phosphorus in the diester linkage to produce the cyclic end product. The biological role of this enzyme is unknown but it is likely to function in some aspects of cellular RNA processing. This is RNA 3'-terminal phosphate cyclase from Staphylothermus marinus (strain ATCC 43588 / DSM 3639 / JCM 9404 / F1).